The primary structure comprises 884 residues: Probable disease resistance protein At1g12290 (884 aa).

The stretch at 26 to 66 (LYYIQNIKENLTSLEEAMEDLKALRDDLLRKVQTAEEGGLQ) forms a coiled coil. The NB-ARC domain maps to 139-443 (AHPATRAVGE…CEGFIDGDEN (305 aa)). Residue 182–189 (GMGGVGKT) coordinates ATP. LRR repeat units lie at residues 519–540 (VVSR…PECP), 541–563 (KLTT…FFRS), 566–588 (RLVV…ISEL), 590–612 (SLRY…LKLK), 613–635 (KLMH…DHLS), and 644–664 (NLRM…ENLE).

It belongs to the disease resistance NB-LRR family.

In terms of biological role, probable disease resistance protein. The polypeptide is Probable disease resistance protein At1g12290 (Arabidopsis thaliana (Mouse-ear cress)).